We begin with the raw amino-acid sequence, 68 residues long: UPF0435 protein Sca_1453 (68 aa).

The protein belongs to the UPF0435 family.

In Staphylococcus carnosus (strain TM300), this protein is UPF0435 protein Sca_1453.